Reading from the N-terminus, the 266-residue chain is Glutamate racemase (266 aa).

Residues 9–10 and 41–42 each bind substrate; these read DS and YG. The active-site Proton donor/acceptor is the Cys-72. 73–74 contacts substrate; that stretch reads NT. The Proton donor/acceptor role is filled by Cys-183. 184 to 185 contributes to the substrate binding site; sequence TH.

This sequence belongs to the aspartate/glutamate racemases family.

It carries out the reaction L-glutamate = D-glutamate. It functions in the pathway cell wall biogenesis; peptidoglycan biosynthesis. Functionally, provides the (R)-glutamate required for cell wall biosynthesis. The sequence is that of Glutamate racemase from Listeria innocua serovar 6a (strain ATCC BAA-680 / CLIP 11262).